The following is a 437-amino-acid chain: Adenylosuccinate synthetase (437 aa).

Residues 12 to 18 (GDEGKGK) and 40 to 42 (GHT) contribute to the GTP site. The Proton acceptor role is filled by D13. 2 residues coordinate Mg(2+): D13 and G40. IMP contacts are provided by residues 13–16 (DEGK), 38–41 (NAGH), T128, R142, Q223, T238, and R302. The Proton donor role is filled by H41. A substrate-binding site is contributed by 298–304 (TTTGRRR). GTP is bound by residues R304, 330–332 (KLD), and 412–414 (SLG).

It belongs to the adenylosuccinate synthetase family. In terms of assembly, homodimer. Mg(2+) is required as a cofactor.

The protein localises to the cytoplasm. The enzyme catalyses IMP + L-aspartate + GTP = N(6)-(1,2-dicarboxyethyl)-AMP + GDP + phosphate + 2 H(+). Its pathway is purine metabolism; AMP biosynthesis via de novo pathway; AMP from IMP: step 1/2. Plays an important role in the de novo pathway of purine nucleotide biosynthesis. Catalyzes the first committed step in the biosynthesis of AMP from IMP. This Prochlorococcus marinus (strain MIT 9313) protein is Adenylosuccinate synthetase.